The following is a 454-amino-acid chain: MSHNDTIVAQATPPGRGGVGILRISGLKAREVAEAVLGKLPKPRYADYLPFKDADGTALDQGIALWFPGPNSFTGEDVLELQGHGGPVILDLLLKRILTLPGLRIARPGEFSERAFLNDKLDLAQAEAIADLIDASSEQAARSALNSLQGAFSARVNHLVEALTHLRIYVEAAIDFPDEEIDFLSDGKIEAQLNGVIADLDAVRAEARQGSLLREGMKVVIAGRPNAGKSSLLNALAGREAAIVTDIAGTTRDVLREHIHIDGMPLHIIDTAGLRDASDEVERIGIERAWQEIEQADRVLFMVDGTTTDAVDPAEIWPDFIARLPAKLPITVVRNKADITGETLGISEVNGHSLVRLSARTGEGVDVLRNHLKQSMGFDTNMEGGFLARRRHLQALAEAAEHLQQGKSQLLGAWAGELLAEELRLAQQALSEITGEFTSDDLLGRIFSSFCIGK.

Arginine 23, glutamate 80, and lysine 120 together coordinate (6S)-5-formyl-5,6,7,8-tetrahydrofolate. The 162-residue stretch at 216-377 folds into the TrmE-type G domain; sequence GMKVVIAGRP…LRNHLKQSMG (162 aa). Residue asparagine 226 participates in K(+) binding. Residues 226–231, 245–251, 270–273, 335–338, and 358–360 each bind GTP; these read NAGKSS, TDIAGTT, DTAG, NKAD, and SAR. A Mg(2+)-binding site is contributed by serine 230. The K(+) site is built by threonine 245, isoleucine 247, and threonine 250. Threonine 251 lines the Mg(2+) pocket. (6S)-5-formyl-5,6,7,8-tetrahydrofolate is bound at residue lysine 454.

This sequence belongs to the TRAFAC class TrmE-Era-EngA-EngB-Septin-like GTPase superfamily. TrmE GTPase family. Homodimer. Heterotetramer of two MnmE and two MnmG subunits. Requires K(+) as cofactor.

Its subcellular location is the cytoplasm. Functionally, exhibits a very high intrinsic GTPase hydrolysis rate. Involved in the addition of a carboxymethylaminomethyl (cmnm) group at the wobble position (U34) of certain tRNAs, forming tRNA-cmnm(5)s(2)U34. The polypeptide is tRNA modification GTPase MnmE (Citrobacter koseri (strain ATCC BAA-895 / CDC 4225-83 / SGSC4696)).